A 182-amino-acid chain; its full sequence is Large ribosomal subunit protein uL5 (182 aa).

It belongs to the universal ribosomal protein uL5 family. As to quaternary structure, part of the 50S ribosomal subunit; part of the 5S rRNA/L5/L18/L25 subcomplex. Contacts the 5S rRNA and the P site tRNA. Forms a bridge to the 30S subunit in the 70S ribosome.

Functionally, this is one of the proteins that bind and probably mediate the attachment of the 5S RNA into the large ribosomal subunit, where it forms part of the central protuberance. In the 70S ribosome it contacts protein S13 of the 30S subunit (bridge B1b), connecting the 2 subunits; this bridge is implicated in subunit movement. Contacts the P site tRNA; the 5S rRNA and some of its associated proteins might help stabilize positioning of ribosome-bound tRNAs. This Acidobacterium capsulatum (strain ATCC 51196 / DSM 11244 / BCRC 80197 / JCM 7670 / NBRC 15755 / NCIMB 13165 / 161) protein is Large ribosomal subunit protein uL5.